A 189-amino-acid polypeptide reads, in one-letter code: Protein seele (189 aa).

Positions 1 to 17 are cleaved as a signal peptide; that stretch reads MLTKALILFGLLALAQG. Positions 23–176 constitute a Saposin B-type domain; it reads REVKCHVCKA…EQASYCDESP (154 aa). Cystine bridges form between cysteine 27–cysteine 172, cysteine 30–cysteine 165, and cysteine 85–cysteine 136. A Prevents secretion from ER motif is present at residues 186 to 189; sequence KEEL.

It belongs to the canopy family.

It localises to the endoplasmic reticulum. Its function is as follows. Involved in embryonic dorsal-ventral patterning which is generated by a series of serine protease processing events where gd processes snk which cleaves ea which then processes spz into the activating ligand for the Toll receptor. Required during this process for the secretion of ea from the developing embryo into the perivitelline space and for ea processing. In Drosophila melanogaster (Fruit fly), this protein is Protein seele.